The following is a 146-amino-acid chain: Holo-[acyl-carrier-protein] synthase (146 aa).

Residues D8 and E61 each coordinate Mg(2+).

It belongs to the P-Pant transferase superfamily. AcpS family. Mg(2+) is required as a cofactor.

It is found in the cytoplasm. The enzyme catalyses apo-[ACP] + CoA = holo-[ACP] + adenosine 3',5'-bisphosphate + H(+). In terms of biological role, transfers the 4'-phosphopantetheine moiety from coenzyme A to a Ser of acyl-carrier-protein. The protein is Holo-[acyl-carrier-protein] synthase of Rhodopseudomonas palustris (strain ATCC BAA-98 / CGA009).